The primary structure comprises 402 residues: Palmitoyltransferase PFA4 (402 aa).

The Cytoplasmic segment spans residues 1-8 (MAVQLKWP). Residues 9-29 (IIGVVIPCVLIAMVAYGSHYF) form a helical membrane-spanning segment. Residues 30 to 39 (VFRTNLSRTE) are Lumenal-facing. A helical transmembrane segment spans residues 40–60 (QILYEVYVCIVWLSYYLAIVV). Over 61–125 (DPGSPPKNFT…GHNNLPHFLR (65 aa)) the chain is Cytoplasmic. The DHHC domain occupies 78 to 128 (RWCKKCQNYKPERSHHCKTCNKCVLKMDHHCPWTYNCVGHNNLPHFLRFVF). The S-palmitoyl cysteine intermediate role is filled by Cys-108. The chain crosses the membrane as a helical span at residues 126–146 (FVFFLIVGMTYVLFQLGKQVL). At 147–165 (HYYDSSKLPSYLIDKKEMC) the chain is on the lumenal side. A helical membrane pass occupies residues 166–186 (AVIFLLPVTFFVFVSIIILFV). The Cytoplasmic segment spans residues 187 to 402 (RCMINLLFRG…LVSKDEISNN (216 aa)).

The protein belongs to the DHHC palmitoyltransferase family. PFA4 subfamily.

The protein localises to the endoplasmic reticulum membrane. The catalysed reaction is L-cysteinyl-[protein] + hexadecanoyl-CoA = S-hexadecanoyl-L-cysteinyl-[protein] + CoA. Its function is as follows. Mediates the reversible addition of palmitate to target proteins, thereby regulating their membrane association and biological function. In Debaryomyces hansenii (strain ATCC 36239 / CBS 767 / BCRC 21394 / JCM 1990 / NBRC 0083 / IGC 2968) (Yeast), this protein is Palmitoyltransferase PFA4.